The chain runs to 223 residues: Ras-related protein RABA4c (223 aa).

GTP is bound at residue 22–29 (GDSAVGKS). The short motif at 44–52 (SKATIGVEF) is the Effector region element. GTP contacts are provided by residues 70 to 74 (DTAGQ), 128 to 131 (NKTD), and 158 to 159 (SA). 2 S-geranylgeranyl cysteine lipidation sites follow: Cys-219 and Cys-220.

It belongs to the small GTPase superfamily. Rab family.

Its subcellular location is the cell membrane. Its function is as follows. Intracellular vesicle trafficking and protein transport. In Arabidopsis thaliana (Mouse-ear cress), this protein is Ras-related protein RABA4c (RABA4C).